The following is a 365-amino-acid chain: MAKQTPLYDQHVACGARMVDFHGWMMPLHYGSQIDEHHLVRQDAGMFDVSHMTIVDLHGNRTREFLRYLLANDVAKLTQPGKALYTGMLNESGGVIDDLIVYFLSEDYFRLVVNSATRDKDLAWISQHAEPYQVEVTVRDDLALIAVQGPQAQQKVATLLTTEQQQAIAGMKPFFGIQTGDLFIATTGYTGEAGYEIALPKQQVVAFWQQLLAAGVKPAGLGARDTLRLEAGMNLYGQEMDEKTSPLAANMGWTVAWQPEDRQFIGRAALERQRMKGTEQLVGLIMTEKGVLRNELPVYFFDAAGNQHVGVITSGSFSPTLGFSIALARVPAGIGEHAVVQIRNREMPVRVTKPGFVRAGKAIVL.

Belongs to the GcvT family. In terms of assembly, the glycine cleavage system is composed of four proteins: P, T, L and H.

The enzyme catalyses N(6)-[(R)-S(8)-aminomethyldihydrolipoyl]-L-lysyl-[protein] + (6S)-5,6,7,8-tetrahydrofolate = N(6)-[(R)-dihydrolipoyl]-L-lysyl-[protein] + (6R)-5,10-methylene-5,6,7,8-tetrahydrofolate + NH4(+). Its function is as follows. The glycine cleavage system catalyzes the degradation of glycine. This is Aminomethyltransferase from Yersinia pseudotuberculosis serotype O:1b (strain IP 31758).